We begin with the raw amino-acid sequence, 475 residues long: Putative aldehyde dehydrogenase SH0913 (475 aa).

201 to 207 (GDGEGVG) lines the NAD(+) pocket. Active-site residues include E245 and C279.

This sequence belongs to the aldehyde dehydrogenase family.

The enzyme catalyses an aldehyde + NAD(+) + H2O = a carboxylate + NADH + 2 H(+). The sequence is that of Putative aldehyde dehydrogenase SH0913 from Staphylococcus haemolyticus (strain JCSC1435).